The primary structure comprises 425 residues: Serine--tRNA ligase (425 aa).

231–233 (TAE) contacts L-serine. Residue 262-264 (RSE) coordinates ATP. Residue Glu-285 coordinates L-serine. 349 to 352 (EISS) is a binding site for ATP. Ser-385 lines the L-serine pocket.

This sequence belongs to the class-II aminoacyl-tRNA synthetase family. Type-1 seryl-tRNA synthetase subfamily. In terms of assembly, homodimer. The tRNA molecule binds across the dimer.

Its subcellular location is the cytoplasm. It catalyses the reaction tRNA(Ser) + L-serine + ATP = L-seryl-tRNA(Ser) + AMP + diphosphate + H(+). The catalysed reaction is tRNA(Sec) + L-serine + ATP = L-seryl-tRNA(Sec) + AMP + diphosphate + H(+). It functions in the pathway aminoacyl-tRNA biosynthesis; selenocysteinyl-tRNA(Sec) biosynthesis; L-seryl-tRNA(Sec) from L-serine and tRNA(Sec): step 1/1. In terms of biological role, catalyzes the attachment of serine to tRNA(Ser). Is also able to aminoacylate tRNA(Sec) with serine, to form the misacylated tRNA L-seryl-tRNA(Sec), which will be further converted into selenocysteinyl-tRNA(Sec). This chain is Serine--tRNA ligase, found in Maricaulis maris (strain MCS10) (Caulobacter maris).